The following is a 291-amino-acid chain: MEMO1 family protein PYRAB05390 (291 aa).

It belongs to the MEMO1 family.

In Pyrococcus abyssi (strain GE5 / Orsay), this protein is MEMO1 family protein PYRAB05390.